We begin with the raw amino-acid sequence, 156 residues long: Small ribosomal subunit protein uS7 (156 aa).

Belongs to the universal ribosomal protein uS7 family. Part of the 30S ribosomal subunit. Contacts proteins S9 and S11.

Functionally, one of the primary rRNA binding proteins, it binds directly to 16S rRNA where it nucleates assembly of the head domain of the 30S subunit. Is located at the subunit interface close to the decoding center, probably blocks exit of the E-site tRNA. In Ruminiclostridium cellulolyticum (strain ATCC 35319 / DSM 5812 / JCM 6584 / H10) (Clostridium cellulolyticum), this protein is Small ribosomal subunit protein uS7.